Reading from the N-terminus, the 895-residue chain is Pentatricopeptide repeat-containing protein At1g74600, chloroplastic (895 aa).

The transit peptide at methionine 1–glutamine 71 directs the protein to the chloroplast. PPR repeat units follow at residues aspartate 83–proline 113, aspartate 114–alanine 148, asparagine 149–phenylalanine 183, tyrosine 184–alanine 214, asparagine 215–proline 249, aspartate 250–cysteine 280, aspartate 284–proline 314, serine 315–isoleucine 349, asparagine 350–leucine 384, aspartate 385–isoleucine 415, arginine 417–threonine 451, aspartate 452–leucine 483, aspartate 484–lysine 514, aspartate 515–proline 549, aspartate 550–lysine 584, glycine 585–leucine 615, aspartate 616–methionine 650, aspartate 651–threonine 685, glutamate 686–proline 716, aspartate 717–proline 751, aspartate 752–proline 787, and glutamate 788–lysine 818. The tract at residues tryptophan 824–valine 895 is type E motif; degenerate.

The protein belongs to the PPR family. PCMP-E subfamily.

The protein resides in the plastid. The protein localises to the chloroplast. This chain is Pentatricopeptide repeat-containing protein At1g74600, chloroplastic (PCMP-E69), found in Arabidopsis thaliana (Mouse-ear cress).